The chain runs to 160 residues: MGVTKKPDLSDPVLRAKLAKGMGHNYYGEPAWPNDLLYIFPVVILGTIACTVGLAVLEPSMIGEPANPFATPLEILPEWYFFPVFQILRTVPNKLLGVLLMAAVPAGLLTVPFLENVNKFQNPFRRPVATTVFLIGTVVSIWLGIGAALPIDISLTLGLF.

The next 3 membrane-spanning stretches (helical) occupy residues 36-56 (LLYIFPVVILGTIACTVGLAV), 95-115 (LLGVLLMAAVPAGLLTVPFLE), and 131-151 (TVFLIGTVVSIWLGIGAALPI).

This sequence belongs to the cytochrome b family. PetD subfamily. The 4 large subunits of the cytochrome b6-f complex are cytochrome b6, subunit IV (17 kDa polypeptide, petD), cytochrome f and the Rieske protein, while the 4 small subunits are petG, petL, petM and petN. The complex functions as a dimer.

Its subcellular location is the plastid. The protein resides in the chloroplast thylakoid membrane. Its function is as follows. Component of the cytochrome b6-f complex, which mediates electron transfer between photosystem II (PSII) and photosystem I (PSI), cyclic electron flow around PSI, and state transitions. This chain is Cytochrome b6-f complex subunit 4, found in Physcomitrium patens (Spreading-leaved earth moss).